Consider the following 335-residue polypeptide: Probable peptide ABC transporter ATP-binding protein y4tR (335 aa).

One can recognise an ABC transporter domain in the interval 15 to 264 (VRDLETHFYG…PTHPYTRALM (250 aa)). An ATP-binding site is contributed by 49 to 56 (GESGCGKS).

Belongs to the ABC transporter superfamily.

The protein resides in the cell inner membrane. In terms of biological role, probably part of a binding-protein-dependent transport system y4tOPQRS for a peptide. Probably responsible for energy coupling to the transport system. This Sinorhizobium fredii (strain NBRC 101917 / NGR234) protein is Probable peptide ABC transporter ATP-binding protein y4tR.